A 409-amino-acid chain; its full sequence is 3-dehydro-bile acid delta(4,6)-reductase (409 aa).

FAD is bound by residues S12, E33, V131, E378, N390, and L391.

This sequence belongs to the BaiN/RdsA family. BaiN subfamily. It depends on FAD as a cofactor.

It carries out the reaction 3-oxocholan-24-oyl-CoA + NAD(+) = 3-oxochol-4-en-24-oyl-CoA + NADH + H(+). It catalyses the reaction 3-oxochol-4-en-24-oyl-CoA + NAD(+) = 3-oxochol-4,6-dien-24-oyl-CoA + NADH + H(+). The catalysed reaction is 12alpha-hydroxy-3-oxocholan-24-oyl-CoA + NAD(+) = 12alpha-hydroxy-3-oxochol-4-en-24-oyl-CoA + NADH + H(+). The enzyme catalyses 12alpha-hydroxy-3-oxochol-4-en-24-oyl-CoA + NAD(+) = 12alpha-hydroxy-3-oxochola-4,6-dien-24-oyl-CoA + NADH + H(+). It functions in the pathway lipid metabolism; bile acid degradation. Its function is as follows. Involved in the secondary bile acid metabolism. Catalyzes two subsequent reductions of the double bonds within the bile acid A/B rings of 3-oxochol-4,6-dien-24-oyl-CoA and 12alpha-hydroxy-3-oxochol-4,6-dien-24-oyl-CoA to yield 3-oxocholan-24-oyl-CoA and 12alpha-hydroxy-3-oxocholan-24-oyl-CoA, respectively. This is 3-dehydro-bile acid delta(4,6)-reductase from Clostridium scindens (strain ATCC 35704 / DSM 5676 / VPI 13733 / 19).